The chain runs to 66 residues: Large ribosomal subunit protein bL35 (66 aa).

It belongs to the bacterial ribosomal protein bL35 family.

The polypeptide is Large ribosomal subunit protein bL35 (Borreliella afzelii (strain PKo) (Borrelia afzelii)).